The following is a 789-amino-acid chain: Disintegrin and metalloproteinase domain-containing protein 7 (789 aa).

An N-terminal signal peptide occupies residues 1-23 (MLTTGIFWMTVLISHIQERGIVG). Positions 24-176 (VEGQELVHPK…NHSCVGLNFT (153 aa)) are excised as a propeptide. The Extracellular portion of the chain corresponds to 24–667 (VEGQELVHPK…EWGEALNLTS (644 aa)). N-linked (GlcNAc...) asparagine glycans are attached at residues Asn84, Asn167, and Asn174. A Peptidase M12B domain is found at 199–393 (KFIELFVVAD…QKPACILNNP (195 aa)). 4 disulfides stabilise this stretch: Cys310-Cys388, Cys350-Cys372, Cys352-Cys357, and Cys459-Cys479. Residues 401 to 487 (YPFCGNKKVD…ECPKDEFQAN (87 aa)) form the Disintegrin domain. N-linked (GlcNAc...) asparagine glycosylation is found at Asn583, Asn628, and Asn664. A helical membrane pass occupies residues 668–689 (VSIMVIVLVMVIIGVGLVILLI). Residues 690 to 789 (RYQKCIKMKQ…DTQSGCERLG (100 aa)) lie on the Cytoplasmic side of the membrane. The interval 764–789 (RGIADPKQTDNVNLNLDTQSGCERLG) is disordered. Residues 772–789 (TDNVNLNLDTQSGCERLG) are compositionally biased toward polar residues.

As to quaternary structure, interacts with ITM2B in sperm; the interaction increases following capacitation. Interacts with HSPA5 and CANX. In terms of tissue distribution, expressed in both the head and tails of sperm (at protein level). Expressed in the epididymis (at protein level). Abundantly expressed in the apical region of the proximal caput epididymal epithelium, with decreasing expression in the mid and distal caput epididymal epithelium.

The protein localises to the membrane. Required for normal male fertility via maintenance of epithelial cell morphology in the caput epididymis and subsequently correct epididymis lumen structure required for sperm development. Plays a role in sperm motility, flagella morphology and tyrosine phosphorylation during sperm capacitance. Plays a role in normal expression levels of HSPA5, ITM2B and ADAM2 in sperm both prior to and post-capacitation. This is a non catalytic metalloprotease-like protein. The sequence is that of Disintegrin and metalloproteinase domain-containing protein 7 from Mus musculus (Mouse).